The sequence spans 141 residues: Protein X (141 aa).

Residues 25–48 (SSGPSFPRPAAGSAASSASSPSPS) are compositionally biased toward low complexity. The interval 25–52 (SSGPSFPRPAAGSAASSASSPSPSDESD) is disordered. A mitochondrial targeting sequence region spans residues 68–113 (PCCLVFTCADLRTMDSTVNFVSWHANRQLGMPSKDLWTPYIKDQLL).

The protein belongs to the orthohepadnavirus protein X family. In terms of assembly, may form homodimer. May interact with host CEBPA, CFLAR, CREB1, DDB1, E4F1, HBXIP, HSPD1/HSP60, NFKBIA, POLR2E and SMAD4. Interacts with host SMC5-SMC6 complex and induces its degradation. Interacts with host TRPC4AP; leading to prevent ubiquitination of TRPC4AP. Interacts with host PLSCR1; this interaction promotes ubiquitination and degradation of HBx and impairs HBx-mediated cell proliferation. In terms of processing, a fraction may be phosphorylated in insect cells and HepG2 cells, a human hepatoblastoma cell line. Phosphorylated in vitro by host protein kinase C or mitogen-activated protein kinase. N-acetylated in insect cells.

The protein resides in the host cytoplasm. Its subcellular location is the host nucleus. It localises to the host mitochondrion. Its function is as follows. Multifunctional protein that plays a role in silencing host antiviral defenses and promoting viral transcription. Does not seem to be essential for HBV infection. May be directly involved in development of cirrhosis and liver cancer (hepatocellular carcinoma). Most of cytosolic activities involve modulation of cytosolic calcium. The effect on apoptosis is controversial depending on the cell types in which the studies have been conducted. May induce apoptosis by localizing in mitochondria and causing loss of mitochondrial membrane potential. May also modulate apoptosis by binding host CFLAR, a key regulator of the death-inducing signaling complex (DISC). Promotes viral transcription by using the host E3 ubiquitin ligase DDB1 to target the SMC5-SMC6 complex to proteasomal degradation. This host complex would otherwise bind to viral episomal DNA, and prevents its transcription. Moderately stimulates transcription of many different viral and cellular transcription elements. Promoters and enhancers stimulated by HBx contain DNA binding sites for NF-kappa-B, AP-1, AP-2, c-EBP, ATF/CREB, or the calcium-activated factor NF-AT. The polypeptide is Protein X (Marmota monax (Woodchuck)).